The chain runs to 122 residues: MIQMQSILEVADNSGAKKVMCIKVLGGSHHMVAKLGDVIVVSIKEAIPGGKVKKGDVYKGVIVRTKTGVVRADGSTIKFDKNALVLLNKQDEPIGTRVFGPVTRELRAKKYVRIMSLAEEVL.

Belongs to the universal ribosomal protein uL14 family. As to quaternary structure, part of the 50S ribosomal subunit. Forms a cluster with proteins L3 and L19. In the 70S ribosome, L14 and L19 interact and together make contacts with the 16S rRNA in bridges B5 and B8.

Functionally, binds to 23S rRNA. Forms part of two intersubunit bridges in the 70S ribosome. This Rickettsia bellii (strain OSU 85-389) protein is Large ribosomal subunit protein uL14.